Reading from the N-terminus, the 46-residue chain is Esculentin-1HSa (46 aa).

Cysteine 40 and cysteine 46 are oxidised to a cystine.

In terms of tissue distribution, expressed by the skin glands.

It is found in the secreted. In terms of biological role, has antibacterial activity against the Gram-positive bacterium S.aureus ATCC 25923 (MIC=12 uM) and the Gram-negative bacterium E.coli ATCC 25726 (MIC=12 uM). In Odorrana hosii (Hose's rock frog), this protein is Esculentin-1HSa.